The chain runs to 1812 residues: Sperm flagellar protein 2 (1812 aa).

The region spanning 1–105 (MSEILCHWLN…LLYQLYIALQ (105 aa)) is the Calponin-homology (CH) domain. 2 coiled-coil regions span residues 178–260 (LENF…KDLQ) and 374–403 (EERRLKDFQDALDREAALAKQAKIDYEEQA). The span at 618–630 (EEKASPVRQESGD) shows a compositional bias: basic and acidic residues. The tract at residues 618 to 658 (EEKASPVRQESGDRSQNLHNVLSAEGTPETEDETRLSTKKT) is disordered. Coiled coils occupy residues 724-750 (LNQAKLLEEALTGFNRNLIELEGKKSQ), 803-827 (ENINQRVAAENQDMDEDQNLRDQIQ), and 868-897 (KEMFMAEIMKKENKAKKKSEEKEAEKKEEF). Residues 879–897 (ENKAKKKSEEKEAEKKEEF) show a composition bias toward basic and acidic residues. 3 disordered regions span residues 879-1002 (ENKA…KPGS), 1272-1322 (EEKE…APVI), and 1793-1812 (EHIQGSDGESSPSRLTEEKK). Over residues 902 to 913 (ATPPTPPAPPPS) the composition is skewed to pro residues. Basic and acidic residues-rich tracts occupy residues 914–929 (EPEKEKEAHPPHERSK), 943–961 (HGNRESPQEGKGKKSETSP), and 1272–1285 (EEKENQPADTKEKP). Positions 1292 to 1310 (KKVKKEPPKKKREDKKGKG) are enriched in basic residues. Residues 1317-1669 (ESAPVITVEE…AEKTSSFIDM (353 aa)) form an interaction with IFT20 region.

In terms of assembly, interacts (via C-terminus) with IFT20. Interacts with DYNC1I2. As to expression, predominantly expressed in ciliated tissues. Mainly expressed in testis, followed by trachea. Also expressed at lower level in lung, kidney and liver.

It localises to the cell projection. It is found in the cilium. Its subcellular location is the flagellum. The protein localises to the cytoplasm. The protein resides in the golgi apparatus. Its function is as follows. Required for correct axoneme development in spermatozoa. Important for normal development of the manchette and sperm head morphology. Essential for male fertility. Plays a role in localization of the intraflagellar transport protein IFT20 to the manchette, suggesting function as an adapter for dynein-mediated protein transport during spermatogenesis. Also plays a role in bone growth where it seems to be required for normal osteoblast differentiation. The sequence is that of Sperm flagellar protein 2 (SPEF2) from Sus scrofa (Pig).